A 90-amino-acid polypeptide reads, in one-letter code: Small ribosomal subunit protein bS16 (90 aa).

The protein belongs to the bacterial ribosomal protein bS16 family.

This chain is Small ribosomal subunit protein bS16, found in Lactobacillus acidophilus (strain ATCC 700396 / NCK56 / N2 / NCFM).